Reading from the N-terminus, the 363-residue chain is Peptide chain release factor 1 (363 aa).

Gln-237 carries the N5-methylglutamine modification.

The protein belongs to the prokaryotic/mitochondrial release factor family. Post-translationally, methylated by PrmC. Methylation increases the termination efficiency of RF1.

It localises to the cytoplasm. Its function is as follows. Peptide chain release factor 1 directs the termination of translation in response to the peptide chain termination codons UAG and UAA. The protein is Peptide chain release factor 1 of Hydrogenovibrio crunogenus (strain DSM 25203 / XCL-2) (Thiomicrospira crunogena).